We begin with the raw amino-acid sequence, 416 residues long: Cytochrome P450 monooxygenase PikC (416 aa).

Substrate is bound by residues Glu-94, 187-191 (AQTAM), and 238-246 (HILLVAGHE). Residue Cys-354 participates in heme binding.

Belongs to the cytochrome P450 family. It depends on heme as a cofactor.

It carries out the reaction narbomycin + 2 reduced [2Fe-2S]-[ferredoxin] + O2 + 2 H(+) = pikromycin + 2 oxidized [2Fe-2S]-[ferredoxin] + H2O. The catalysed reaction is narbomycin + 2 reduced [2Fe-2S]-[ferredoxin] + O2 + 2 H(+) = neopikromycin + 2 oxidized [2Fe-2S]-[ferredoxin] + H2O. It catalyses the reaction narbomycin + 4 reduced [2Fe-2S]-[ferredoxin] + 2 O2 + 4 H(+) = novapikromycin + 4 oxidized [2Fe-2S]-[ferredoxin] + 2 H2O. The enzyme catalyses 10-deoxymethymycin + 2 reduced [2Fe-2S]-[ferredoxin] + O2 + 2 H(+) = methymycin + 2 oxidized [2Fe-2S]-[ferredoxin] + H2O. It carries out the reaction 10-deoxymethymycin + 2 reduced [2Fe-2S]-[ferredoxin] + O2 + 2 H(+) = neomethymycin + 2 oxidized [2Fe-2S]-[ferredoxin] + H2O. The catalysed reaction is 10-deoxymethymycin + 4 reduced [2Fe-2S]-[ferredoxin] + 2 O2 + 4 H(+) = novamethymycin + 4 oxidized [2Fe-2S]-[ferredoxin] + 2 H2O. It participates in antibiotic biosynthesis. In terms of biological role, catalyzes the hydroxylation of narbomycin to give rise to pikromycin, and of 10-deoxymethymycin (YC-17) to give rise to methymycin and neomethymycin during macrolide antibiotic biosynthesis. In addition, produces low amounts of neopicromycin, novapikromycin and novamethymycin. Requires the participation of a ferredoxin and a ferredoxin reductase for the transfer of electrons from NADPH to the monooxygenase. In Streptomyces venezuelae, this protein is Cytochrome P450 monooxygenase PikC.